The primary structure comprises 93 residues: MISIYAQIASFSAIGVGIAIGVAACGGGIGMGIAANATILGMARNPSISSKLTTTMYISLAMIEAQVIYALVIVFILLYANPLLTETIAAAAK.

The next 2 membrane-spanning stretches (helical) occupy residues 13 to 33 (AIGV…GMGI) and 58 to 78 (ISLA…FILL).

Belongs to the ATPase C chain family. F-type ATPases have 2 components, F(1) - the catalytic core - and F(0) - the membrane proton channel. F(1) has five subunits: alpha(3), beta(3), gamma(1), delta(1), epsilon(1). F(0) has three main subunits: a(1), b(2) and c(10-14). The alpha and beta chains form an alternating ring which encloses part of the gamma chain. F(1) is attached to F(0) by a central stalk formed by the gamma and epsilon chains, while a peripheral stalk is formed by the delta and b chains.

The protein localises to the cell inner membrane. Its function is as follows. F(1)F(0) ATP synthase produces ATP from ADP in the presence of a proton or sodium gradient. F-type ATPases consist of two structural domains, F(1) containing the extramembraneous catalytic core and F(0) containing the membrane proton channel, linked together by a central stalk and a peripheral stalk. During catalysis, ATP synthesis in the catalytic domain of F(1) is coupled via a rotary mechanism of the central stalk subunits to proton translocation. Functionally, key component of the F(0) channel; it plays a direct role in translocation across the membrane. A homomeric c-ring of between 10-14 subunits forms the central stalk rotor element with the F(1) delta and epsilon subunits. The protein is ATP synthase subunit c of Campylobacter hominis (strain ATCC BAA-381 / DSM 21671 / CCUG 45161 / LMG 19568 / NCTC 13146 / CH001A).